We begin with the raw amino-acid sequence, 94 residues long: DNA-binding protein HU (94 aa).

The tract at residues 55 to 94 (RAERPGRNPKTGEPIMIAASNNPSFKPGKALKDAVKSSAG) is disordered. The span at 84 to 94 (ALKDAVKSSAG) shows a compositional bias: basic and acidic residues.

The protein belongs to the bacterial histone-like protein family.

Its function is as follows. Histone-like DNA-binding protein which is capable of wrapping DNA to stabilize it, and thus to prevent its denaturation under extreme environmental conditions. This is DNA-binding protein HU (hup) from Xylella fastidiosa (strain Temecula1 / ATCC 700964).